A 600-amino-acid polypeptide reads, in one-letter code: DNA repair and recombination protein mus-11 (600 aa).

The DNA-binding element occupies 148-152 (KRALR). The segment covering 268 to 319 (LNPQAQQSRPLSRSGSTGSLNTRQQPQNSHQFTARAQSRPPQQQLNSNQSRP) has biased composition (polar residues). Disordered stretches follow at residues 268–357 (LNPQ…AGAA) and 387–600 (APKP…QRLA). Composition is skewed to low complexity over residues 325–343 (NNSSNANTPNNPQNYTTPQ) and 458–470 (ARSASGSFSRAGP). Over residues 502–512 (GFSSSPSTNRG) the composition is skewed to polar residues. 2 stretches are compositionally biased toward low complexity: residues 540–564 (SATTTTIAANTTAGSATGGNAAPSA) and 577–591 (ANASNATAAGAATSG).

Belongs to the RAD52 family. In terms of assembly, part of a complex that includes mei-3/rad51 and mus-11/rad52.

Its subcellular location is the nucleus. In terms of biological role, involved in DNA double-strand break (DSB) repair and recombination. Promotes the annealing of complementary single-stranded DNA and by stimulation of the mei-3/rad51 recombinase. The chain is DNA repair and recombination protein mus-11 (mus-11) from Neurospora crassa (strain ATCC 24698 / 74-OR23-1A / CBS 708.71 / DSM 1257 / FGSC 987).